We begin with the raw amino-acid sequence, 990 residues long: Presequence protease, mitochondrial (990 aa).

The N-terminal 56 residues, 1–56 (MLRFQRTVPRVAIRRLANVYSEGAVLHGYKVRRAQEIPEMRMAAVELEHEMTGARH), are a transit peptide targeting the mitochondrion. H84 contributes to the Zn(2+) binding site. The active-site Proton acceptor is the E87. H88 lines the Zn(2+) pocket. The active site involves E160. E185 provides a ligand contact to Zn(2+).

Belongs to the peptidase M16 family. PreP subfamily. Monomer and homodimer; homodimerization is induced by binding of the substrate. The cofactor is Zn(2+).

The protein localises to the mitochondrion intermembrane space. It localises to the mitochondrion matrix. Degrades mitochondrial transit peptides after their cleavage in the intermembrane space or in the matrix, and presequence peptides; clearance of these peptides is required to keep the presequence processing machinery running. Preferentially cleaves the N-terminal side of paired basic amino acid residues. Also degrades other unstructured peptides. May function as an ATP-dependent peptidase as opposed to a metalloendopeptidase. The polypeptide is Presequence protease, mitochondrial (CYM1) (Eremothecium gossypii (strain ATCC 10895 / CBS 109.51 / FGSC 9923 / NRRL Y-1056) (Yeast)).